A 77-amino-acid chain; its full sequence is Small ribosomal subunit protein uS17 (77 aa).

This sequence belongs to the universal ribosomal protein uS17 family. In terms of assembly, part of the 30S ribosomal subunit.

One of the primary rRNA binding proteins, it binds specifically to the 5'-end of 16S ribosomal RNA. In Rickettsia akari (strain Hartford), this protein is Small ribosomal subunit protein uS17.